Consider the following 338-residue polypeptide: 2,3-dihydroxybenzoate decarboxylase (338 aa).

Residue Cys251 is part of the active site.

This sequence belongs to the metallo-dependent hydrolases superfamily. In terms of assembly, homotetramer.

It catalyses the reaction 2,3-dihydroxybenzoate + H(+) = catechol + CO2. Its pathway is aromatic compound metabolism; benzoate degradation via hydroxylation. In terms of biological role, has an absolute substrate specificity for 2,3-DHBA. This is 2,3-dihydroxybenzoate decarboxylase from Aspergillus oryzae (strain ATCC 42149 / RIB 40) (Yellow koji mold).